The sequence spans 85 residues: Large ribosomal subunit protein bL27 (85 aa).

Positions 1 to 20 (MAHKKAGGSTRNGRDSEAKR) are disordered.

Belongs to the bacterial ribosomal protein bL27 family.

This is Large ribosomal subunit protein bL27 from Citrobacter koseri (strain ATCC BAA-895 / CDC 4225-83 / SGSC4696).